A 285-amino-acid polypeptide reads, in one-letter code: Bark agglutinin I polypeptide A (285 aa).

Residues 1-31 (MTSYNFKTQTSFPLLLSISFFFLLLLNKVNS) form the signal peptide. Asn147 carries N-linked (GlcNAc...) asparagine glycosylation. Mn(2+) contacts are provided by Glu156 and Asp158. Asp158, Phe160, Asn162, and Asp166 together coordinate Ca(2+). Residues Asp166 and His171 each coordinate Mn(2+). An N-linked (GlcNAc...) asparagine glycan is attached at Asn188.

This sequence belongs to the leguminous lectin family. As to quaternary structure, RPbAI is composed of two polypeptides, A and B, that associate into five different tetrameric isolectins. The A4 combination is the only one devoid of agglutination activity. Isoform B4 displays maximal agglutination activity. In terms of tissue distribution, strong expression in seed. Lower levels in the flower, and the bark of the roots. No expression in leaf. The lectin accumulates in the inner bark in autumn.

N-acetyl-D-galactosamine specific lectin. Bark lectins are storage protein that probably maintains stocks of nitrogen during dormant period. Self-aggregatable molecules that can bind their own carbohydrate side chains. They could also play a role in the plant's defense against phytophagous invertebrates or herbivorous higher animals. This chain is Bark agglutinin I polypeptide A, found in Robinia pseudoacacia (Black locust).